The sequence spans 218 residues: Adenylate kinase (218 aa).

10–15 contacts ATP; sequence GAGKGT. Residues 30–59 are NMP; sequence STGDMLRAAVKAGTPLGIEAKKVMDAGGLV. AMP-binding positions include threonine 31, arginine 36, 57 to 59, 85 to 88, and glutamine 92; these read GLV and GFPR. Positions 122 to 159 are LID; that stretch reads GRRSHAASGRTYHVKFNPPKVAGVDDVTGEPLIQRDDD. Residues arginine 123 and 132 to 133 each bind ATP; that span reads TY. 2 residues coordinate AMP: arginine 156 and arginine 167. Residue glycine 203 participates in ATP binding.

It belongs to the adenylate kinase family. Monomer.

Its subcellular location is the cytoplasm. It carries out the reaction AMP + ATP = 2 ADP. Its pathway is purine metabolism; AMP biosynthesis via salvage pathway; AMP from ADP: step 1/1. Functionally, catalyzes the reversible transfer of the terminal phosphate group between ATP and AMP. Plays an important role in cellular energy homeostasis and in adenine nucleotide metabolism. The protein is Adenylate kinase of Albidiferax ferrireducens (strain ATCC BAA-621 / DSM 15236 / T118) (Rhodoferax ferrireducens).